Here is a 689-residue protein sequence, read N- to C-terminus: tRNA 5-methylaminomethyl-2-thiouridine biosynthesis bifunctional protein MnmC (689 aa).

Residues 1–245 are tRNA (mnm(5)s(2)U34)-methyltransferase; the sequence is MNQRPIQTAT…KREMLTGTLP (245 aa). Residues 270–689 are FAD-dependent cmnm(5)s(2)U34 oxidoreductase; that stretch reads IGGGIVSALT…RSPATQESSR (420 aa).

The protein in the N-terminal section; belongs to the methyltransferase superfamily. tRNA (mnm(5)s(2)U34)-methyltransferase family. In the C-terminal section; belongs to the DAO family. The cofactor is FAD.

Its subcellular location is the cytoplasm. It catalyses the reaction 5-aminomethyl-2-thiouridine(34) in tRNA + S-adenosyl-L-methionine = 5-methylaminomethyl-2-thiouridine(34) in tRNA + S-adenosyl-L-homocysteine + H(+). Its function is as follows. Catalyzes the last two steps in the biosynthesis of 5-methylaminomethyl-2-thiouridine (mnm(5)s(2)U) at the wobble position (U34) in tRNA. Catalyzes the FAD-dependent demodification of cmnm(5)s(2)U34 to nm(5)s(2)U34, followed by the transfer of a methyl group from S-adenosyl-L-methionine to nm(5)s(2)U34, to form mnm(5)s(2)U34. The polypeptide is tRNA 5-methylaminomethyl-2-thiouridine biosynthesis bifunctional protein MnmC (Yersinia pseudotuberculosis serotype O:1b (strain IP 31758)).